Reading from the N-terminus, the 201-residue chain is Small ribosomal subunit protein uS4c (201 aa).

The disordered stretch occupies residues 15 to 44; the sequence is LGSLPGLTSKRPTVKSELRNQSRSSKKSQY. An S4 RNA-binding domain is found at 89 to 151; it reads MRLDNILFRL…QKSKTLIQNY (63 aa).

This sequence belongs to the universal ribosomal protein uS4 family. In terms of assembly, part of the 30S ribosomal subunit. Contacts protein S5. The interaction surface between S4 and S5 is involved in control of translational fidelity.

It is found in the plastid. Its subcellular location is the chloroplast. One of the primary rRNA binding proteins, it binds directly to 16S rRNA where it nucleates assembly of the body of the 30S subunit. Its function is as follows. With S5 and S12 plays an important role in translational accuracy. The protein is Small ribosomal subunit protein uS4c (rps4) of Glycine max (Soybean).